A 217-amino-acid chain; its full sequence is Large ribosomal subunit protein uL3 (217 aa).

Positions Ser-129–Ala-162 are disordered. Over residues Ala-142–Gly-153 the composition is skewed to low complexity.

The protein belongs to the universal ribosomal protein uL3 family. Part of the 50S ribosomal subunit. Forms a cluster with proteins L14 and L19.

Functionally, one of the primary rRNA binding proteins, it binds directly near the 3'-end of the 23S rRNA, where it nucleates assembly of the 50S subunit. This Prochlorococcus marinus (strain MIT 9215) protein is Large ribosomal subunit protein uL3.